Consider the following 275-residue polypeptide: 4-hydroxy-tetrahydrodipicolinate reductase (275 aa).

An NAD(+)-binding site is contributed by 12 to 17 (GAAGRM). Arg-39 serves as a coordination point for NADP(+). Residues 102–104 (GTT) and 126–129 (SGNM) contribute to the NAD(+) site. His-160 serves as the catalytic Proton donor/acceptor. His-161 contacts (S)-2,3,4,5-tetrahydrodipicolinate. Lys-164 serves as the catalytic Proton donor. 170 to 171 (GT) is a (S)-2,3,4,5-tetrahydrodipicolinate binding site.

It belongs to the DapB family.

Its subcellular location is the cytoplasm. The enzyme catalyses (S)-2,3,4,5-tetrahydrodipicolinate + NAD(+) + H2O = (2S,4S)-4-hydroxy-2,3,4,5-tetrahydrodipicolinate + NADH + H(+). The catalysed reaction is (S)-2,3,4,5-tetrahydrodipicolinate + NADP(+) + H2O = (2S,4S)-4-hydroxy-2,3,4,5-tetrahydrodipicolinate + NADPH + H(+). It participates in amino-acid biosynthesis; L-lysine biosynthesis via DAP pathway; (S)-tetrahydrodipicolinate from L-aspartate: step 4/4. In terms of biological role, catalyzes the conversion of 4-hydroxy-tetrahydrodipicolinate (HTPA) to tetrahydrodipicolinate. This Agrobacterium fabrum (strain C58 / ATCC 33970) (Agrobacterium tumefaciens (strain C58)) protein is 4-hydroxy-tetrahydrodipicolinate reductase.